We begin with the raw amino-acid sequence, 286 residues long: 3-hydroxyanthranilate 3,4-dioxygenase (286 aa).

The interval 1–160 (MERCVRVKSW…SEQYRTGKPN (160 aa)) is domain A (catalytic). R43 is an O2 binding site. Fe cation contacts are provided by H47, E53, and H91. Residue E53 participates in substrate binding. Substrate contacts are provided by R95 and E105. A linker region spans residues 161–177 (PDQLLKEPPFPLSTRSV). Residues 178-286 (MEPMSLKAWL…QDPACKKPLG (109 aa)) are domain B.

This sequence belongs to the 3-HAO family. Monomer. The cofactor is Fe(2+).

It localises to the cytoplasm. The protein resides in the cytosol. The enzyme catalyses 3-hydroxyanthranilate + O2 = (2Z,4Z)-2-amino-3-carboxymuconate 6-semialdehyde. It participates in cofactor biosynthesis; NAD(+) biosynthesis; quinolinate from L-kynurenine: step 3/3. In terms of biological role, catalyzes the oxidative ring opening of 3-hydroxyanthranilate to 2-amino-3-carboxymuconate semialdehyde, which spontaneously cyclizes to quinolinate. In Rattus norvegicus (Rat), this protein is 3-hydroxyanthranilate 3,4-dioxygenase (Haao).